The sequence spans 388 residues: Basigin (388 aa).

The signal sequence occupies residues 1 to 21 (MAAGADVPCAVLALLVLGSLA). Topologically, residues 27-323 (TAGFIKSPLS…SGSATVNLRV (297 aa)) are extracellular. An Ig-like domain is found at 43-131 (DSVELHCEAV…NHLSKSPKVK (89 aa)). Disulfide bonds link Cys-49-Cys-113 and Cys-162-Cys-211. Positions 143-218 (ERPVITGQYS…YECIYNTNPV (76 aa)) constitute an Ig-like C2-type domain. Residues Asn-163, Asn-222, Asn-280, Asn-286, and Asn-307 are each glycosylated (N-linked (GlcNAc...) asparagine). In terms of domain architecture, Ig-like V-type spans 229 to 323 (PQVVAYKKSE…SGSATVNLRV (95 aa)). Cysteines 250 and 306 form a disulfide. The chain crosses the membrane as a helical span at residues 324-344 (RSRLAALWPFLGIVAEVLVLV). Over 345–388 (TIIFIYEKRRKPDEVLDDDDGGSAPLKSNATNHKDKNVRQRNAN) the chain is Cytoplasmic. The disordered stretch occupies residues 358-388 (EVLDDDDGGSAPLKSNATNHKDKNVRQRNAN).

Interacts with NXNL1, SLC2A1 and SLC16A1. Post-translationally, N-glycosylated. As to expression, retinal cone photoreceptors (at protein level). In terms of tissue distribution, brain endothelial cells, kidney epithelial cells and erythroblasts (at protein level).

It localises to the cell membrane. Its subcellular location is the photoreceptor inner segment. It is found in the cell projection. The protein localises to the cilium. The protein resides in the photoreceptor outer segment. It localises to the endoplasmic reticulum membrane. Its subcellular location is the basolateral cell membrane. Essential for normal retinal maturation and development. Acts as a retinal cell surface receptor for NXNL1 and plays an important role in NXNL1-mediated survival of retinal cone photoreceptors. In association with glucose transporter SLC16A1/GLUT1 and NXNL1, promotes retinal cone survival by enhancing aerobic glycolysis and accelerating the entry of glucose into photoreceptors. Functionally, signaling receptor for cyclophilins, essential for PPIA/CYPA and PPIB/CYPB-dependent signaling related to chemotaxis and adhesion of immune cells. Plays an important role in targeting the monocarboxylate transporters SLC16A1/GLUT1, SLC16A3, SLC16A8, SLC16A11 and SLC16A12 to the plasma membrane. Acts as a coreceptor for vascular endothelial growth factor receptor 2 (KDR/VEGFR2) in endothelial cells enhancing its VEGFA-mediated activation and downstream signaling. Promotes angiogenesis through EPAS1/HIF2A-mediated up-regulation of VEGFA and KDR/VEGFR2 in endothelial cells. The chain is Basigin (BSG) from Gallus gallus (Chicken).